We begin with the raw amino-acid sequence, 87 residues long: Protein Tat (87 aa).

Residues 1 to 21 form a disordered region; the sequence is MDPVDPNLEPWNHPGSQPRTP. Residues 1–24 are interaction with human CREBBP; sequence MDPVDPNLEPWNHPGSQPRTPCNK. A transactivation region spans residues 1–48; the sequence is MDPVDPNLEPWNHPGSQPRTPCNKCYCKKCCYHCQMCFITKGLGISYG. Positions 22, 25, and 27 each coordinate Zn(2+). The segment at 22 to 37 is cysteine-rich; it reads CNKCYCKKCCYHCQMC. Residue Lys28 is modified to N6-acetyllysine; by host PCAF. Zn(2+) contacts are provided by Cys30, His33, Cys34, and Cys37. The tract at residues 38-48 is core; the sequence is FITKGLGISYG. The tract at residues 45–87 is disordered; sequence ISYGRKKRRQRRRPPQGNQAHQDPLPEQPSSQHRGDHPTGPKE. Residues 48-58 show a composition bias toward basic residues; it reads GRKKRRQRRRP. The Nuclear localization signal, RNA-binding (TAR), and protein transduction motif lies at 49–57; the sequence is RKKRRQRRR. The segment at 49–87 is interaction with the host capping enzyme RNGTT; it reads RKKRRQRRRPPQGNQAHQDPLPEQPSSQHRGDHPTGPKE. Lys50 and Lys51 each carry N6-acetyllysine; by host EP300 and GCN5L2. Asymmetric dimethylarginine; by host PRMT6 is present on residues Arg52 and Arg53. Residues 77 to 87 show a composition bias toward basic and acidic residues; it reads HRGDHPTGPKE. Positions 78-80 match the Cell attachment site motif; sequence RGD.

The protein belongs to the lentiviruses Tat family. In terms of assembly, interacts with host CCNT1. Associates with the P-TEFb complex composed at least of Tat, P-TEFb (CDK9 and CCNT1), TAR RNA, RNA Pol II. Recruits the HATs CREBBP, TAF1/TFIID, EP300, PCAF and GCN5L2. Interacts with host KAT5/Tip60; this interaction targets the latter to degradation. Interacts with the host deacetylase SIRT1. Interacts with host capping enzyme RNGTT; this interaction stimulates RNGTT. Binds to host KDR, and to the host integrins ITGAV/ITGB3 and ITGA5/ITGB1. Interacts with host KPNB1/importin beta-1 without previous binding to KPNA1/importin alpha-1. Interacts with EIF2AK2. Interacts with host nucleosome assembly protein NAP1L1; this interaction may be required for the transport of Tat within the nucleus, since the two proteins interact at the nuclear rim. Interacts with host C1QBP/SF2P32; this interaction involves lysine-acetylated Tat. Interacts with the host chemokine receptors CCR2, CCR3 and CXCR4. Interacts with host DPP4/CD26; this interaction may trigger an anti-proliferative effect. Interacts with host LDLR. Interacts with the host extracellular matrix metalloproteinase MMP1. Interacts with host PRMT6; this interaction mediates Tat's methylation. Interacts with, and is ubiquitinated by MDM2/Hdm2. Interacts with host PSMC3 and HTATIP2. Interacts with STAB1; this interaction may overcome SATB1-mediated repression of IL2 and IL2RA (interleukin) in T cells by binding to the same domain than HDAC1. Interacts (when acetylated) with human CDK13, thereby increasing HIV-1 mRNA splicing and promoting the production of the doubly spliced HIV-1 protein Nef. Interacts with host TBP; this interaction modulates the activity of transcriptional pre-initiation complex. Interacts with host RELA. Interacts with host PLSCR1; this interaction negatively regulates Tat transactivation activity by altering its subcellular distribution. Post-translationally, asymmetrical arginine methylation by host PRMT6 seems to diminish the transactivation capacity of Tat and affects the interaction with host CCNT1. In terms of processing, acetylation by EP300, CREBBP, GCN5L2/GCN5 and PCAF regulates the transactivation activity of Tat. EP300-mediated acetylation of Lys-50 promotes dissociation of Tat from the TAR RNA through the competitive binding to PCAF's bromodomain. In addition, the non-acetylated Tat's N-terminus can also interact with PCAF. PCAF-mediated acetylation of Lys-28 enhances Tat's binding to CCNT1. Lys-50 is deacetylated by SIRT1. Polyubiquitination by host MDM2 does not target Tat to degradation, but activates its transactivation function and fosters interaction with CCNT1 and TAR RNA. Post-translationally, phosphorylated by EIF2AK2 on serine and threonine residues adjacent to the basic region important for TAR RNA binding and function. Phosphorylation of Tat by EIF2AK2 is dependent on the prior activation of EIF2AK2 by dsRNA.

It is found in the host nucleus. It localises to the host nucleolus. Its subcellular location is the host cytoplasm. The protein localises to the secreted. Transcriptional activator that increases RNA Pol II processivity, thereby increasing the level of full-length viral transcripts. Recognizes a hairpin structure at the 5'-LTR of the nascent viral mRNAs referred to as the transactivation responsive RNA element (TAR) and recruits the cyclin T1-CDK9 complex (P-TEFb complex) that will in turn hyperphosphorylate the RNA polymerase II to allow efficient elongation. The CDK9 component of P-TEFb and other Tat-activated kinases hyperphosphorylate the C-terminus of RNA Pol II that becomes stabilized and much more processive. Other factors such as HTATSF1/Tat-SF1, SUPT5H/SPT5, and HTATIP2 are also important for Tat's function. Besides its effect on RNA Pol II processivity, Tat induces chromatin remodeling of proviral genes by recruiting the histone acetyltransferases (HATs) CREBBP, EP300 and PCAF to the chromatin. This also contributes to the increase in proviral transcription rate, especially when the provirus integrates in transcriptionally silent region of the host genome. To ensure maximal activation of the LTR, Tat mediates nuclear translocation of NF-kappa-B by interacting with host RELA. Through its interaction with host TBP, Tat may also modulate transcription initiation. Tat can reactivate a latently infected cell by penetrating in it and transactivating its LTR promoter. In the cytoplasm, Tat is thought to act as a translational activator of HIV-1 mRNAs. Its function is as follows. Extracellular circulating Tat can be endocytosed by surrounding uninfected cells via the binding to several surface receptors such as CD26, CXCR4, heparan sulfate proteoglycans (HSPG) or LDLR. Neurons are rarely infected, but they internalize Tat via their LDLR. Through its interaction with nuclear HATs, Tat is potentially able to control the acetylation-dependent cellular gene expression. Modulates the expression of many cellular genes involved in cell survival, proliferation or in coding for cytokines or cytokine receptors. Tat plays a role in T-cell and neurons apoptosis. Tat induced neurotoxicity and apoptosis probably contribute to neuroAIDS. Circulating Tat also acts as a chemokine-like and/or growth factor-like molecule that binds to specific receptors on the surface of the cells, affecting many cellular pathways. In the vascular system, Tat binds to ITGAV/ITGB3 and ITGA5/ITGB1 integrins dimers at the surface of endothelial cells and competes with bFGF for heparin-binding sites, leading to an excess of soluble bFGF. This chain is Protein Tat, found in Homo sapiens (Human).